Reading from the N-terminus, the 226-residue chain is Transmembrane protein 204 (226 aa).

Residues 1–5 (MTVQR) lie on the Cytoplasmic side of the membrane. The helical transmembrane segment at 6–26 (LVAAAVLVALVSLILNNVAAF) threads the bilayer. At 27–103 (TSNWVCQTLE…LQFDMMRACN (77 aa)) the chain is on the extracellular side. A helical membrane pass occupies residues 104-124 (LVATAALTAGQLTFLLGLVGL). Residues 125 to 136 (PLLSPDAPCWEE) lie on the Cytoplasmic side of the membrane. Residues 137–157 (AMAAAFQLASFVLVIGLVTFY) traverse the membrane as a helical segment. Topologically, residues 158 to 170 (RIGPYTNLSWSCY) are extracellular. N-linked (GlcNAc...) asparagine glycosylation occurs at N164. A helical transmembrane segment spans residues 171–191 (LNIGACLLATLAAAMLIWNIL). Topologically, residues 192–226 (HKREDCMAPRVIVISRSLTARFRRGLDNDYVESPC) are cytoplasmic.

Highly expressed in lung, heart, kidney and placenta. Lower expression in thymus, spleen, liver, testis and ovary. Expressed in endothelial and restricted epithelial cell populations.

It localises to the cell junction. It is found in the adherens junction. Its subcellular location is the cell membrane. Can influence paracellular permeability. Appears to be involved in cell-cell interactions through adherens. This is Transmembrane protein 204 (TMEM204) from Homo sapiens (Human).